A 93-amino-acid chain; its full sequence is MSRSIKKGPFIDDHLMKKTLKAKEGKDNRPIKTWSRRSTILPEMIGFTYNVHNGRVFVPVYITENHVGYKLGEFAPTRTFKGHKGSVQKKIGK.

The protein belongs to the universal ribosomal protein uS19 family.

Protein S19 forms a complex with S13 that binds strongly to the 16S ribosomal RNA. The chain is Small ribosomal subunit protein uS19 from Helicobacter pylori (strain G27).